A 504-amino-acid chain; its full sequence is Cobyric acid synthase (504 aa).

One can recognise a GATase cobBQ-type domain in the interval 254–442 (AIDVAVIRYP…MHDLFHNDMF (189 aa)). The active-site Nucleophile is cysteine 336. Residue histidine 434 is part of the active site.

Belongs to the CobB/CobQ family. CobQ subfamily.

It functions in the pathway cofactor biosynthesis; adenosylcobalamin biosynthesis. Catalyzes amidations at positions B, D, E, and G on adenosylcobyrinic A,C-diamide. NH(2) groups are provided by glutamine, and one molecule of ATP is hydrogenolyzed for each amidation. The sequence is that of Cobyric acid synthase from Anoxybacillus flavithermus (strain DSM 21510 / WK1).